The following is a 134-amino-acid chain: 16 kDa beta-galactoside-binding lectin (134 aa).

The residue at position 1 (Met-1) is an N-acetylmethionine. The Galectin domain occupies Gly-4–Ser-134. A beta-D-galactoside is bound at residue Trp-69–Lys-75.

As to quaternary structure, homodimer. Mainly in the liver (adult), mainly in the muscle (embryo).

Functionally, this protein binds beta-galactoside. Its physiological function is not yet known. It may be involved in the regulation of differentiation. In Gallus gallus (Chicken), this protein is 16 kDa beta-galactoside-binding lectin.